A 243-amino-acid chain; its full sequence is PF03932 family protein CutC (243 aa).

The protein belongs to the CutC family.

It is found in the cytoplasm. In Histophilus somni (strain 2336) (Haemophilus somnus), this protein is PF03932 family protein CutC.